Here is a 135-residue protein sequence, read N- to C-terminus: Galectin-1 (135 aa).

Ala-2 carries the N-acetylalanine modification. The Galectin domain maps to 4–135; it reads GLVASNLNLK…DFKIKCVAFE (132 aa). Lys-13 and Lys-29 each carry N6-acetyllysine. At Ser-30 the chain carries Phosphoserine. A beta-D-galactoside-binding positions include 45–49, His-53, Asn-62, and 69–72; these read HFNPR and WGAE. Lys-108 carries the N6-acetyllysine; alternate modification. At Lys-108 the chain carries N6-succinyllysine; alternate. Lys-128 carries the post-translational modification N6-acetyllysine.

In terms of assembly, homodimer. Binds LGALS3BP. Interacts with CD2, CD3, CD4, CD6, CD7, CD43, ALCAM and CD45. Interacts with laminin (via poly-N-acetyllactosamine). Interacts with SUSD2. Interacts with cargo receptor TMED10; the interaction mediates the translocation from the cytoplasm into the ERGIC (endoplasmic reticulum-Golgi intermediate compartment) and thereby secretion.

It localises to the secreted. The protein resides in the extracellular space. It is found in the extracellular matrix. Its subcellular location is the cytoplasm. Its function is as follows. Lectin that binds beta-galactoside and a wide array of complex carbohydrates. Plays a role in regulating apoptosis, cell proliferation and cell differentiation. Inhibits CD45 protein phosphatase activity and therefore the dephosphorylation of Lyn kinase. Strong inducer of T-cell apoptosis. The protein is Galectin-1 (LGALS1) of Bos taurus (Bovine).